A 294-amino-acid chain; its full sequence is Glycine--tRNA ligase alpha subunit (294 aa).

This sequence belongs to the class-II aminoacyl-tRNA synthetase family. Tetramer of two alpha and two beta subunits.

Its subcellular location is the cytoplasm. It carries out the reaction tRNA(Gly) + glycine + ATP = glycyl-tRNA(Gly) + AMP + diphosphate. The polypeptide is Glycine--tRNA ligase alpha subunit (Trichormus variabilis (strain ATCC 29413 / PCC 7937) (Anabaena variabilis)).